A 394-amino-acid polypeptide reads, in one-letter code: NAD(P)H-quinone oxidoreductase subunit H (394 aa).

It belongs to the complex I 49 kDa subunit family. NDH-1 can be composed of about 15 different subunits; different subcomplexes with different compositions have been identified which probably have different functions.

It localises to the cellular thylakoid membrane. The enzyme catalyses a plastoquinone + NADH + (n+1) H(+)(in) = a plastoquinol + NAD(+) + n H(+)(out). It carries out the reaction a plastoquinone + NADPH + (n+1) H(+)(in) = a plastoquinol + NADP(+) + n H(+)(out). In terms of biological role, NDH-1 shuttles electrons from an unknown electron donor, via FMN and iron-sulfur (Fe-S) centers, to quinones in the respiratory and/or the photosynthetic chain. The immediate electron acceptor for the enzyme in this species is believed to be plastoquinone. Couples the redox reaction to proton translocation, and thus conserves the redox energy in a proton gradient. Cyanobacterial NDH-1 also plays a role in inorganic carbon-concentration. The chain is NAD(P)H-quinone oxidoreductase subunit H from Trichormus variabilis (strain ATCC 29413 / PCC 7937) (Anabaena variabilis).